Reading from the N-terminus, the 225-residue chain is Cytidylate kinase (225 aa).

An ATP-binding site is contributed by 11–19; sequence GPAAAGKST.

Belongs to the cytidylate kinase family. Type 1 subfamily.

The protein resides in the cytoplasm. It carries out the reaction CMP + ATP = CDP + ADP. The catalysed reaction is dCMP + ATP = dCDP + ADP. This chain is Cytidylate kinase, found in Bacillus cytotoxicus (strain DSM 22905 / CIP 110041 / 391-98 / NVH 391-98).